The chain runs to 557 residues: Acid-sensing ion channel 1B (557 aa).

Over 1-98 the chain is Cytoplasmic; sequence MVRITCTISF…SIRQGLWALV (98 aa). Basic and acidic residues predominate over residues 36 to 45; that stretch reads KDGEQGKYQE. The interval 36–57 is disordered; the sequence is KDGEQGKYQEEGDDPDAYDGPE. Residues 46–57 show a composition bias toward acidic residues; the sequence is EGDDPDAYDGPE. A helical membrane pass occupies residues 99–115; that stretch reads FLLAISMFLLQVVDRVI. The Extracellular segment spans residues 116–460; the sequence is YYLQYDYVTL…ETIEQKKAYE (345 aa). N-linked (GlcNAc...) asparagine glycans are attached at residues Asn-133 and Asn-194. Cystine bridges form between Cys-142/Cys-229, Cys-207/Cys-214, Cys-325/Cys-400, Cys-343/Cys-396, Cys-347/Cys-394, Cys-356/Cys-378, and Cys-358/Cys-370. N-linked (GlcNAc...) asparagine glycosylation is found at Asn-401 and Asn-428. A discontinuously helical membrane pass occupies residues 461 to 491; the sequence is LAGLLGDIGGQMGLFIGASILTILELFDYLY. The GAS motif; ion selectivity filter signature appears at 477-479; the sequence is GAS. The Cytoplasmic portion of the chain corresponds to 492–557; that stretch reads EVIKFKLCRC…GQGNFEDFTC (66 aa).

The protein belongs to the amiloride-sensitive sodium channel (TC 1.A.6) family. ASIC1 subfamily. In terms of assembly, homotrimer. Heterotrimer; with other ASIC proteins producing channel with different properties. In terms of tissue distribution, expressed in central nervous system.

Its subcellular location is the cell membrane. The protein resides in the postsynaptic cell membrane. It localises to the cell projection. The protein localises to the dendrite. It carries out the reaction Na(+)(in) = Na(+)(out). The catalysed reaction is K(+)(in) = K(+)(out). The enzyme catalyses Li(+)(in) = Li(+)(out). It catalyses the reaction Ca(2+)(in) = Ca(2+)(out). Inhibited by the diuretic drug amiloride. In terms of biological role, forms voltage-independent, pH-gated trimeric sodium channels that act as postsynaptic excitatory receptors in the nervous system, playing a crucial role in regulating synaptic plasticity, learning, and memory. Upon extracellular pH drop this channel elicits transient, fast activating, and completely desensitizing inward currents. Displays high selectivity for sodium ions but can also permit the permeation of other cations. The protein is Acid-sensing ion channel 1B (asic1b) of Danio rerio (Zebrafish).